Here is a 1257-residue protein sequence, read N- to C-terminus: Liprin-alpha-2 (1257 aa).

A disordered region spans residues 1 to 29; that stretch reads MMCEVMPTINEDTPMSQRGSQSSGSDSDS. Low complexity predominate over residues 16-26; sequence SQRGSQSSGSD. 2 coiled-coil regions span residues 29 to 154 and 185 to 235; these read SHFE…SLRM and KALD…SSEG. Serine 236 carries the post-translational modification Phosphoserine. Residue threonine 237 is modified to Phosphothreonine. The residue at position 239 (serine 239) is a Phosphoserine. Coiled coils occupy residues 264 to 541 and 643 to 695; these read TDDT…SLIE and HSDA…GLNL. The segment at 439–463 is disordered; that stretch reads GQLEEKNQELQRARQREKMNEEHNK. Residues serine 687 and serine 689 each carry the phosphoserine modification. The segment covering 709–725 has biased composition (low complexity); it reads TASSLASSSPPSGHSTP. Disordered regions lie at residues 709–738 and 759–834; these read TASS…EMDR and EEDG…KSSI. Over residues 787-802 the composition is skewed to polar residues; sequence TLPSSYHNDARSSLSA. A phosphoserine mark is found at serine 817 and serine 820. SAM domains follow at residues 898-964, 1020-1084, and 1108-1177; these read WDGP…MVSL, NHEW…LKRL, and WSND…LLAL. Residues 1081–1107 are a coiled coil; that stretch reads LKRLNYDRKELERRREASQHEIKDVLV.

It belongs to the liprin family. Liprin-alpha subfamily. In terms of assembly, forms homodimers and heterodimers with liprins-alpha and liprins-beta. Interacts with the second PTPase domain of PTPRD, PTPRF and PTPRS. Interacts with KIF1A; the interaction decreases in presence of calcium.

The protein localises to the cytoplasm. The protein resides in the cell surface. It is found in the cell projection. It localises to the dendritic spine. In terms of biological role, alters PTPRF cellular localization and induces PTPRF clustering. May regulate the disassembly of focal adhesions. May localize receptor-like tyrosine phosphatases type 2A at specific sites on the plasma membrane, possibly regulating their interaction with the extracellular environment and their association with substrates. In neuronal cells, is a scaffolding protein in the dendritic spines which acts as immobile postsynaptic post able to recruit KIF1A-driven dense core vesicles to dendritic spines. This is Liprin-alpha-2 (Ppfia2) from Mus musculus (Mouse).